Here is a 210-residue protein sequence, read N- to C-terminus: Outer-membrane lipoprotein LolB (210 aa).

Positions 1–29 (MSLISNNEERSLRVRYCIAIALSALLISG) are cleaved as a signal peptide. A lipid anchor (N-palmitoyl cysteine) is attached at Cys-30. Cys-30 carries the S-diacylglycerol cysteine lipid modification.

This sequence belongs to the LolB family. In terms of assembly, monomer.

It localises to the cell outer membrane. In terms of biological role, plays a critical role in the incorporation of lipoproteins in the outer membrane after they are released by the LolA protein. In Coxiella burnetii (strain CbuK_Q154) (Coxiella burnetii (strain Q154)), this protein is Outer-membrane lipoprotein LolB.